The chain runs to 807 residues: Glycerol-3-phosphate acyltransferase (807 aa).

Residues 305–310 (CHRSHM) carry the HXXXXD motif motif.

It belongs to the GPAT/DAPAT family.

Its subcellular location is the cell inner membrane. It catalyses the reaction sn-glycerol 3-phosphate + an acyl-CoA = a 1-acyl-sn-glycero-3-phosphate + CoA. It functions in the pathway phospholipid metabolism; CDP-diacylglycerol biosynthesis; CDP-diacylglycerol from sn-glycerol 3-phosphate: step 1/3. This Klebsiella pneumoniae subsp. pneumoniae (strain ATCC 700721 / MGH 78578) protein is Glycerol-3-phosphate acyltransferase.